The primary structure comprises 313 residues: Homoserine O-succinyltransferase (313 aa).

C142 (acyl-thioester intermediate) is an active-site residue. Substrate contacts are provided by K163 and S192. H235 acts as the Proton acceptor in catalysis. E237 is an active-site residue. R249 provides a ligand contact to substrate.

Belongs to the MetA family.

The protein resides in the cytoplasm. The enzyme catalyses L-homoserine + succinyl-CoA = O-succinyl-L-homoserine + CoA. It participates in amino-acid biosynthesis; L-methionine biosynthesis via de novo pathway; O-succinyl-L-homoserine from L-homoserine: step 1/1. In terms of biological role, transfers a succinyl group from succinyl-CoA to L-homoserine, forming succinyl-L-homoserine. In Vibrio campbellii (strain ATCC BAA-1116), this protein is Homoserine O-succinyltransferase.